Consider the following 76-residue polypeptide: High-potential iron-sulfur protein isozyme 2 (76 aa).

[4Fe-4S] cluster-binding residues include Cys38, Cys41, Cys54, and Cys70.

Belongs to the high-potential iron-sulfur protein (HiPIP) family. In terms of assembly, homodimer.

Specific class of high-redox-potential 4Fe-4S ferredoxins. Functions in anaerobic electron transport in most purple and in some other photosynthetic bacteria and in at least one genus (Paracoccus) of halophilic, denitrifying bacteria. This is High-potential iron-sulfur protein isozyme 2 (hip2) from Halorhodospira halophila (Ectothiorhodospira halophila).